The primary structure comprises 49 residues: Large ribosomal subunit protein bL33B (49 aa).

Belongs to the bacterial ribosomal protein bL33 family.

This Bacillus licheniformis (strain ATCC 14580 / DSM 13 / JCM 2505 / CCUG 7422 / NBRC 12200 / NCIMB 9375 / NCTC 10341 / NRRL NRS-1264 / Gibson 46) protein is Large ribosomal subunit protein bL33B.